The primary structure comprises 356 residues: Cdc42 effector protein 4 (356 aa).

An N6-methyllysine modification is found at lysine 5. The residue at position 18 (serine 18) is a Phosphoserine. The 15-residue stretch at 27–41 folds into the CRIB domain; the sequence is ISAPLGDFRHTMHVG. The interval 51–102 is disordered; sequence SFLNSKAGEPDGESLDEQPSSSSSKRSLLSRKFRGSKRSQSVTRGEREQRDM. Residue serine 64 is modified to Phosphoserine. Residues 78 to 87 show a composition bias toward basic residues; the sequence is LLSRKFRGSK. A phosphoserine mark is found at serine 105, serine 109, and serine 118. 2 disordered regions span residues 122-182 and 257-356; these read LNEK…LDEQ and VAAP…EIRV. Residues 123–132 are compositionally biased toward basic and acidic residues; sequence NEKEAAEKGT. Residues 133–143 show a composition bias toward low complexity; that stretch reads SKLPKSLSSSP. Phosphoserine is present on residues serine 138, serine 140, serine 142, serine 174, serine 292, and serine 295. Residues 287–315 show a composition bias toward low complexity; the sequence is AAAAPSPGSARSMGSHTTRDSSSLSSCTS. Residues 318–344 are compositionally biased toward basic and acidic residues; the sequence is LEERSPAFRGPDRARAAVSRQPDKEFS. The segment covering 345–356 has biased composition (acidic residues); the sequence is FMDEEEEDEIRV.

Belongs to the BORG/CEP family. As to quaternary structure, interacts with CDC42 and RHOQ, in a GTP-dependent manner. Not detected in any of the adult tissues tested. May be expressed only in fetal or embryonic tissues.

It localises to the endomembrane system. The protein resides in the cytoplasm. The protein localises to the cytoskeleton. Its function is as follows. Probably involved in the organization of the actin cytoskeleton. May act downstream of CDC42 to induce actin filament assembly leading to cell shape changes. Induces pseudopodia formation, when overexpressed in fibroblasts. The polypeptide is Cdc42 effector protein 4 (CDC42EP4) (Homo sapiens (Human)).